We begin with the raw amino-acid sequence, 292 residues long: Elongation factor Ts (292 aa).

The interval threonine 82–valine 85 is involved in Mg(2+) ion dislocation from EF-Tu.

It belongs to the EF-Ts family.

It localises to the cytoplasm. In terms of biological role, associates with the EF-Tu.GDP complex and induces the exchange of GDP to GTP. It remains bound to the aminoacyl-tRNA.EF-Tu.GTP complex up to the GTP hydrolysis stage on the ribosome. The polypeptide is Elongation factor Ts (Legionella pneumophila (strain Paris)).